A 469-amino-acid polypeptide reads, in one-letter code: Protein translocase subunit SecY (469 aa).

Residues 1–20 (MSFIDSLATLGQYLPAVTKP) are Cytoplasmic-facing. The helical transmembrane segment at 21–47 (KEKPSLGQKLVWSLVAVIIYLIMASTP) threads the bilayer. Topologically, residues 48 to 59 (LYGITSASFFKN) are extracellular. An intramembrane region (helical) is located at residues 60–67 (LILEQIIF). A discontinuously helical transmembrane segment spans residues 60 to 88 (LILEQIIFASTTGTLAQLGIGPIITAGLI). An intramembrane segment occupies 68–79 (ASTTGTLAQLGI). Residues 80 to 88 (GPIITAGLI) constitute an intramembrane region (helical). The Cytoplasmic segment spans residues 89-109 (MQILAGSKLISIDLNDPDDRV). Residues 110 to 131 (KFTEAQKGLAFIFILVESALFG) traverse the membrane as a helical segment. Topologically, residues 132 to 146 (YVLARTSTTINASIL) are extracellular. The chain crosses the membrane as a helical span at residues 147–171 (FIAGIVIAQLIVATYLILLLDELIQ). Residues 172 to 178 (KGWGLGS) are Cytoplasmic-facing. A helical transmembrane segment spans residues 179 to 197 (GVSLFILAGVMKIMFWDMF). Topologically, residues 198–240 (GIASVSSQNLPIGFFPALFTALASHSDVLNLIVNTSTKNLFQP) are extracellular. A helical transmembrane segment spans residues 241-262 (DLVGLVTTIALIIITIYLTTMT). Residues 263–287 (IEIPVTSQKLRGIRRTIPLNFLYVS) lie on the Cytoplasmic side of the membrane. Residues 288–309 (SIPVIFVAVLGSDIQLFASLAS) traverse the membrane as a helical segment. Topologically, residues 310 to 347 (YVSPSASNILNTVSGVFFFPPPNSAIPHSIYAVVLDPL) are extracellular. A helical transmembrane segment spans residues 348–367 (GALEYAVVFIVLSILFGILW). Topologically, residues 368-410 (VDVAGLDPATQAQQLVEAGIEIPGVRNNPKIIEGILARYIYPL) are cytoplasmic. Residues 411–429 (AFFSSIIVGLIAVFATLLG) form a helical membrane-spanning segment. Topologically, residues 430–432 (AYG) are extracellular. Residues 433-447 (TGIGILLAVTIAIQY) traverse the membrane as a helical segment. Topologically, residues 448–469 (YSLLAYERSLEMYPLLKRLIGE) are cytoplasmic.

The protein belongs to the SecY/SEC61-alpha family. Component of the Sec protein translocase complex. Heterotrimer consisting of alpha (SecY), beta (SecG) and gamma (SecE) subunits. The heterotrimers can form oligomers, although 1 heterotrimer is thought to be able to translocate proteins. Interacts with the ribosome. May interact with SecDF, and other proteins may be involved.

It localises to the cell membrane. The central subunit of the protein translocation channel SecYEG. Consists of two halves formed by TMs 1-5 and 6-10. These two domains form a lateral gate at the front which open onto the bilayer between TMs 2 and 7, and are clamped together by SecE at the back. The channel is closed by both a pore ring composed of hydrophobic SecY resides and a short helix (helix 2A) on the extracellular side of the membrane which forms a plug. The plug probably moves laterally to allow the channel to open. The ring and the pore may move independently. The protein is Protein translocase subunit SecY of Saccharolobus solfataricus (strain ATCC 35092 / DSM 1617 / JCM 11322 / P2) (Sulfolobus solfataricus).